A 370-amino-acid polypeptide reads, in one-letter code: DNA replication and repair protein RecF (370 aa).

An ATP-binding site is contributed by 30–37 (GPNGSGKT).

It belongs to the RecF family.

The protein resides in the cytoplasm. Its function is as follows. The RecF protein is involved in DNA metabolism; it is required for DNA replication and normal SOS inducibility. RecF binds preferentially to single-stranded, linear DNA. It also seems to bind ATP. This chain is DNA replication and repair protein RecF, found in Prosthecochloris aestuarii (strain DSM 271 / SK 413).